The sequence spans 366 residues: MAEESPKNSAAEIPVTSNGEVGDAHEHGYNRDLKHSLPSGLGLSETQITSHGFDSTKEGVTEAGASQGSSAPPLPCVLSPSRVAASQLTQHAGGQRTHTKGGPVILADEIKNPAMEKLELVRKWSLNTYKCTRQIISEKLGRGSRTVDLELEAQIDILRDNKKKYENILKLAQTLSTQLFQMVHTQKQLGDAFADLSLKSLELHEEFGYNADTQKLLAKNGETLLGAINFFIASVNTLVNKTIEDTLMTVKQYENARIEYDAYRTDLEELNLGPRDANTLPKIEQSQHLFQIHKEKYDKMRSDVSVKLKFLEENKVKVLRNQLALFHSAVAAYFAGNQKQLEQTLKQFHVKLKTPGVDAPSWLEEQ.

Positions 1-78 are disordered; sequence MAEESPKNSA…SSAPPLPCVL (78 aa). Alanine 2 bears the N-acetylalanine mark. Serine 5 carries the post-translational modification Phosphoserine. Residues 22–35 show a composition bias toward basic and acidic residues; that stretch reads GDAHEHGYNRDLKH. Phosphoserine occurs at positions 36 and 39. The span at 44–53 shows a compositional bias: polar residues; sequence SETQITSHGF. Phosphoserine is present on residues serine 69, serine 79, and serine 125. In terms of domain architecture, AH spans 146-346; it reads TVDLELEAQI…NQKQLEQTLK (201 aa). A Phosphothreonine modification is found at threonine 354.

Forms homodimers or heterodimers with ARFIP2. Interacts with non-myristoylated GTP-bound ARF3, but not to GDP-bound ARF3. Interacts with ARF1. Binds with lower affinity to ARF5 and with very little affinity to ARF6. Interacts with ARL1. Interacts with ATG9A.

It localises to the golgi apparatus. It is found in the trans-Golgi network membrane. Functionally, plays a role in controlling biogenesis of secretory granules at the trans-Golgi network. Mechanistically, binds ARF-GTP at the neck of a growing secretory granule precursor and forms a protective scaffold. Once the granule precursor has been completely loaded, active PRKD1 phosphorylates ARFIP1 and releases it from ARFs. In turn, ARFs induce fission. Through this mechanism, ensures proper secretory granule formation at the Golgi of pancreatic beta cells. This chain is Arfaptin-1, found in Rattus norvegicus (Rat).